The chain runs to 239 residues: MGRKWNNIKDKKASKDANTSRIYAKFGREIYVAAKQGEPDPESNQALRVVLERAKTYNVPRTIIDRAVEKAKGGSEENYDELRYEGFGPNGAMVIVDTLTNNVNRTAADVRAAFSKNSGNMGVNGSVAYMFDATAVIGLEGKTSDEVLEILMEADVDARDILEEEDSVIVYAEPDQFHSVQSALKGAGVEEFTVAELTMLAQSDVTLPEDAQVQFEKMVDALEDLEDVQQVYHNVDLGE.

Belongs to the TACO1 family. YeeN subfamily.

The protein resides in the cytoplasm. The sequence is that of Probable transcriptional regulatory protein BCG9842_B4761 from Bacillus cereus (strain G9842).